The sequence spans 301 residues: Bifunctional protein FolD (301 aa).

NADP(+) contacts are provided by residues 166–168, Ser-191, and Ile-232; that span reads GKS.

It belongs to the tetrahydrofolate dehydrogenase/cyclohydrolase family. In terms of assembly, homodimer.

The catalysed reaction is (6R)-5,10-methylene-5,6,7,8-tetrahydrofolate + NADP(+) = (6R)-5,10-methenyltetrahydrofolate + NADPH. The enzyme catalyses (6R)-5,10-methenyltetrahydrofolate + H2O = (6R)-10-formyltetrahydrofolate + H(+). It functions in the pathway one-carbon metabolism; tetrahydrofolate interconversion. Catalyzes the oxidation of 5,10-methylenetetrahydrofolate to 5,10-methenyltetrahydrofolate and then the hydrolysis of 5,10-methenyltetrahydrofolate to 10-formyltetrahydrofolate. The sequence is that of Bifunctional protein FolD from Orientia tsutsugamushi (strain Boryong) (Rickettsia tsutsugamushi).